The following is a 180-amino-acid chain: Adenine phosphoribosyltransferase (180 aa).

This sequence belongs to the purine/pyrimidine phosphoribosyltransferase family. In terms of assembly, homodimer.

The protein resides in the cytoplasm. The catalysed reaction is AMP + diphosphate = 5-phospho-alpha-D-ribose 1-diphosphate + adenine. The protein operates within purine metabolism; AMP biosynthesis via salvage pathway; AMP from adenine: step 1/1. In terms of biological role, catalyzes a salvage reaction resulting in the formation of AMP, that is energically less costly than de novo synthesis. The sequence is that of Adenine phosphoribosyltransferase from Agrobacterium fabrum (strain C58 / ATCC 33970) (Agrobacterium tumefaciens (strain C58)).